Reading from the N-terminus, the 512-residue chain is MGRSMLPEQQEDVSRKSKKEKKSKKDKKRKLEAEAEVVVVEAAAATSTDEATKSSKKKRAKGDLGQGEEAENGGGKVVAVTGKGSADAKYAPLSSFAATALPPQVLDCCKGFERPSPIQAYAWPYLLDGRDFIGIAATGSGKTIAFGVPALMHVRRKMGEKSAKKGVPRVLVLSPTRELAQQIADVLCEAGAPCGISSVCLYGGTSKGPQISALKSGVDIVIGTPGRMKDLIEMGICRLNDVSFVVLDEADRMLDMGFEPEVRAILSQTASVRQTVMFSATWPPAVHQLAQEFMDPNPIKVVIGSEDLAANHDVMQIVEVLDDRSRDSRLVALLDKYHKAQRNRVLVFVLYKREATRVETMLQRRGWSAVSVHGDKAQHDRTKALSLFKEGSCPLMIATDVASRGLDIPDVEVVINYSYPLTTEDYVHRIGRTGRAGKKGVAHTFFTQENKGLAGELVNVLREAGQVVPPALTKFGTHVKKKESQIYGSHFKEIKADAPKSTKITFGDSDED.

Disordered regions lie at residues methionine 1 to alanine 33 and alanine 45 to lysine 76. The stretch at serine 14 to alanine 45 forms a coiled coil. Basic residues predominate over residues lysine 16–lysine 30. Residues serine 94–alanine 120 carry the Q motif motif. In terms of domain architecture, Helicase ATP-binding spans tryptophan 123–lysine 300. Alanine 136–threonine 143 is an ATP binding site. Positions aspartate 248–aspartate 251 match the DEAD box motif. Positions leucine 333–glycine 476 constitute a Helicase C-terminal domain.

The protein belongs to the DEAD box helicase family. DDX5/DBP2 subfamily.

Its subcellular location is the nucleus. The protein resides in the nucleolus. It carries out the reaction ATP + H2O = ADP + phosphate + H(+). In terms of biological role, ATP-dependent RNA helicase required for 60S ribosomal subunit synthesis. Involved in efficient pre-rRNA processing, predominantly at site A3, which is necessary for the normal formation of 25S and 5.8S rRNAs. The sequence is that of DEAD-box ATP-dependent RNA helicase 5 from Oryza sativa subsp. japonica (Rice).